Here is a 1352-residue protein sequence, read N- to C-terminus: Patatin-like phospholipase domain-containing protein 7 (1352 aa).

Residues 1-36 (MQNEEDACLEAGYCLGTTLSSWRLHFMEEQSQSTML) are Lumenal-facing. The chain crosses the membrane as a helical span at residues 37–57 (MGIGIGALLTLAFVGITFFFV). Over 58 to 1352 (YRRVRRLRRA…DQGPRLEHPS (1295 aa)) the chain is Cytoplasmic. A nucleoside 3',5'-cyclic phosphate is bound at residue 170-297 (VLGHFEKPLF…VRVVQIIMVR (128 aa)). The disordered stretch occupies residues 340 to 364 (MSYGPEEQLERSLRPSEFSSSDHGS). Phosphoserine is present on residues Ser-341 and Ser-379. Positions 384–411 (SNHGEVDELRQSQGSGSNTSAFQESHEG) are disordered. Positions 394-406 (QSQGSGSNTSAFQ) are enriched in polar residues. A nucleoside 3',5'-cyclic phosphate contacts are provided by residues 499–585 (FLHV…YEIM) and 613–718 (ALDW…LGEK). Positions 681–967 (VHAVRDSELA…RGCAQVGILR (287 aa)) are involved in the binding to lipid droplets. The PNPLA domain occupies 950–1116 (LVLGGGGARG…INNLPADVAR (167 aa)). The GXGXXG signature appears at 954–959 (GGGARG). A GXSXG motif is present at residues 981-985 (GTSIG). Catalysis depends on Ser-983, which acts as the Nucleophile. Asp-1103 serves as the catalytic Proton acceptor. A DGA/G motif is present at residues 1103-1105 (DGG). A Phosphoserine modification is found at Ser-1280. Thr-1284 bears the Phosphothreonine mark. The interval 1295-1352 (KETYADFQSTGIELDSDSEYEPSMLQGPPSLTSPEQSQDSFPWLPNQDDQGPRLEHPS) is disordered. The segment covering 1323 to 1334 (PSLTSPEQSQDS) has biased composition (polar residues).

It belongs to the NTE family. Expressed in white and brown adipose tissue, cardiac muscle, skeletal muscle, and testis. In terms of tissue distribution, expressed in white adipose tissue, cardiac muscle, skeletal muscle, and testis.

It localises to the endoplasmic reticulum membrane. Its subcellular location is the lipid droplet. The enzyme catalyses a 1-acyl-sn-glycero-3-phosphocholine + H2O = sn-glycerol 3-phosphocholine + a fatty acid + H(+). It catalyses the reaction 1-(9Z-octadecenoyl)-sn-glycero-3-phosphocholine + H2O = sn-glycerol 3-phosphocholine + (9Z)-octadecenoate + H(+). It carries out the reaction 1-(9Z-octadecenoyl)-sn-glycero-3-phosphoethanolamine + H2O = sn-glycero-3-phosphoethanolamine + (9Z)-octadecenoate + H(+). The catalysed reaction is 1-(9Z-octadecenoyl)-sn-glycero-3-phospho-L-serine + H2O = sn-glycero-3-phospho-L-serine + (9Z)-octadecenoate + H(+). The enzyme catalyses 1-hexadecanoyl-sn-glycero-3-phosphocholine + H2O = sn-glycerol 3-phosphocholine + hexadecanoate + H(+). It catalyses the reaction 1-hexadecanoyl-sn-glycero-3-phosphate + H2O = sn-glycerol 3-phosphate + hexadecanoate + H(+). Its activity is regulated as follows. cAMP does not regulate lysophospholipase activity in vitro. Slightly inhibited by organophosphorus (OP) compounds such as mipafox, which is likely why mice are less sensitive to distal axonophathy induced by OPs compared to humans. Lysophospholipase which preferentially deacylates unsaturated lysophosphatidylcholine (C18:1), generating glycerophosphocholine. Can also deacylate, to a lesser extent, lysophosphatidylethanolamine (C18:1), lysophosphatidyl-L-serine (C18:1) and lysophosphatidic acid (C16:0). Its function is as follows. Lysophospholipase. Functionally, lacks lysophospholipase activity. The sequence is that of Patatin-like phospholipase domain-containing protein 7 (Pnpla7) from Mus musculus (Mouse).